The chain runs to 116 residues: MDNKRHQTSIGSELSEAQNRLSTVGMRIRQRIDRGYAYSGKNVSGMDDQVPIRDVASTIVPQFRTQVLYEQQQQPQQMHRPAMNGPAPMLVNQRTESSNLDCMQEEMLSNGKRRVF.

The tract at residues methionine 1–serine 22 is disordered. A compositionally biased stretch (polar residues) spans threonine 8–serine 22.

It belongs to the DIF1/spd1 family.

It is found in the cytoplasm. It localises to the nucleus. Functionally, mediates the nuclear localization of the ribonucleotide reductase. The sequence is that of Damage-regulated import facilitator 1 (DIF1) from Candida glabrata (strain ATCC 2001 / BCRC 20586 / JCM 3761 / NBRC 0622 / NRRL Y-65 / CBS 138) (Yeast).